The chain runs to 219 residues: Large ribosomal subunit protein uL29m (219 aa).

Residues 77 to 97 (ASKYPLPKPVSPEKLEKREST) are disordered. Positions 87–97 (SPEKLEKREST) are enriched in basic and acidic residues.

The protein belongs to the universal ribosomal protein uL29 family. Component of the mitochondrial large ribosomal subunit. Mature mitochondrial ribosomes consist of a small (37S) and a large (54S) subunit. The 37S subunit contains at least 33 different proteins and 1 molecule of RNA (15S). The 54S subunit contains at least 45 different proteins and 1 molecule of RNA (21S).

The protein localises to the mitochondrion. This Emericella nidulans (strain FGSC A4 / ATCC 38163 / CBS 112.46 / NRRL 194 / M139) (Aspergillus nidulans) protein is Large ribosomal subunit protein uL29m (mrpl4).